The following is a 298-amino-acid chain: Bifunctional protein FolD (298 aa).

Residues 166-168 (GRS), Ser191, and Ile232 each bind NADP(+).

The protein belongs to the tetrahydrofolate dehydrogenase/cyclohydrolase family. Homodimer.

It catalyses the reaction (6R)-5,10-methylene-5,6,7,8-tetrahydrofolate + NADP(+) = (6R)-5,10-methenyltetrahydrofolate + NADPH. The enzyme catalyses (6R)-5,10-methenyltetrahydrofolate + H2O = (6R)-10-formyltetrahydrofolate + H(+). It participates in one-carbon metabolism; tetrahydrofolate interconversion. Functionally, catalyzes the oxidation of 5,10-methylenetetrahydrofolate to 5,10-methenyltetrahydrofolate and then the hydrolysis of 5,10-methenyltetrahydrofolate to 10-formyltetrahydrofolate. The chain is Bifunctional protein FolD from Maricaulis maris (strain MCS10) (Caulobacter maris).